Consider the following 105-residue polypeptide: Probable guanidinium efflux system subunit GdnD (105 aa).

Transmembrane regions (helical) follow at residues 1–21, 32–52, 59–79, and 85–105; these read MLHWISLLCAGCLEMAGVALM, WVLLIIVGFAASFSLLSYAME, AYAVWTGIGTAGGALIGILFY, and AKRIFFIALILCSAVGLKILS.

Belongs to the drug/metabolite transporter (DMT) superfamily. Small multidrug resistance (SMR) (TC 2.A.7.1) family. YkkC/YkkD subfamily. The efflux pump is composed of GdnC and GdnD.

Its subcellular location is the cell membrane. Probably involved in guanidinium transport. In vitro, confers resistance to a broad range of toxic compounds such as cationic dyes, neutral and anionic antimicrobials. In Bacillus subtilis (strain 168), this protein is Probable guanidinium efflux system subunit GdnD.